Here is a 199-residue protein sequence, read N- to C-terminus: Small ribosomal subunit protein uS4c (199 aa).

Residues 1-24 (MESDQSKVESDQSKMESDQSKVES) show a composition bias toward basic and acidic residues. The segment at 1 to 35 (MESDQSKVESDQSKMESDQSKVESDQSISQSTSKK) is disordered. The S4 RNA-binding domain maps to 84-146 (MRLDNIIFRL…QKSQELIKRN (63 aa)).

Belongs to the universal ribosomal protein uS4 family. In terms of assembly, part of the 30S ribosomal subunit. Contacts protein S5. The interaction surface between S4 and S5 is involved in control of translational fidelity.

Its subcellular location is the plastid. It is found in the chloroplast. Its function is as follows. One of the primary rRNA binding proteins, it binds directly to 16S rRNA where it nucleates assembly of the body of the 30S subunit. Functionally, with S5 and S12 plays an important role in translational accuracy. The chain is Small ribosomal subunit protein uS4c (rps4) from Psilotum nudum (Whisk fern).